The chain runs to 156 residues: Ribonuclease H (156 aa).

The region spanning 1-142 (MGKQVEIFTD…CDELARAAAN (142 aa)) is the RNase H type-1 domain. The Mg(2+) site is built by aspartate 10, glutamate 48, aspartate 70, and aspartate 134.

Belongs to the RNase H family. As to quaternary structure, monomer. Mg(2+) serves as cofactor.

The protein localises to the cytoplasm. It carries out the reaction Endonucleolytic cleavage to 5'-phosphomonoester.. Functionally, endonuclease that specifically degrades the RNA of RNA-DNA hybrids. This is Ribonuclease H from Photorhabdus laumondii subsp. laumondii (strain DSM 15139 / CIP 105565 / TT01) (Photorhabdus luminescens subsp. laumondii).